Here is a 596-residue protein sequence, read N- to C-terminus: Nuclear receptor subfamily 2 group C member 2 (596 aa).

The residue at position 19 (S19) is a Phosphoserine; by MAPK. Position 46 is a phosphoserine (S46). Phosphoserine; by MAPK is present on residues S55 and S68. Position 98 is a phosphoserine (S98). Positions 114 to 189 form a DNA-binding region, nuclear receptor; the sequence is VEYCVVCGDK…MGMKMESVQS (76 aa). 2 consecutive NR C4-type zinc fingers follow at residues 117-137 and 153-177; these read CVVC…CEGC and CRSS…LKKC. K192 participates in a covalent cross-link: Glycyl lysine isopeptide (Lys-Gly) (interchain with G-Cter in SUMO2). The residue at position 219 (S219) is a Phosphoserine. Position 231 is an N6-acetyllysine (K231). The 243-residue stretch at 341 to 583 folds into the NR LBD domain; it reads GSIHVISRDQ…SIIPYILKME (243 aa).

It belongs to the nuclear hormone receptor family. NR2 subfamily. As to quaternary structure, homodimer; can bind DNA as homodimer. Heterodimer; binds DNA as a heterodimer with NR2C1 required for chromatin remodeling and for binding to promoter regions such as globin DR1 repeats. Interacts with NR2C2AP; the interaction represses selective NR2C2-mediated transcriptional activity. Interacts with PCAF; the interaction preferentially occurs on the non-phosphorylated form and induces NR2C2-mediated transactivation activity and does not require the ligand-binding domain. Interacts (MAPK-mediated phosphorylated form) with NRIP1; the interaction promotes repression of NR2C2-mediated activity. Interacts with NLRP10. Interacts (via ligand-binding region) with transcriptional corepressor JAZF1; the interaction promotes NR2C2-mediated transcriptional repression. In terms of processing, phosphorylation on Ser-19 and Ser-68 is an important regulator of NR2C2-mediated transcriptional activity. Phosphorylation on these residues recruits the corepressor, NRIP1, leading to transcripional repression, whereas the non-phosphorylated form preferentially recruits the coactivator, PCAF. In terms of tissue distribution, expressed, during embryogenesis, in perichondrium, developing glomeruli structures and tubules of kidney, as well as in intestiinal villi. Also expressed in lung and hair follicles.

The protein localises to the nucleus. Orphan nuclear receptor that can act as a repressor or activator of transcription. An important repressor of nuclear receptor signaling pathways such as retinoic acid receptor, retinoid X, vitamin D3 receptor, thyroid hormone receptor and estrogen receptor pathways. May regulate gene expression during the late phase of spermatogenesis. Activates transcriptional activity of LHCG and is antagonist of PPARA-mediated transactivation. Together with NR2C1, forms the core of the DRED (direct repeat erythroid-definitive) complex that represses embryonic and fetal globin transcription including that of GATA1. Binds to hormone response elements (HREs) consisting of two 5'-AGGTCA-3' half site direct repeat consensus sequences. Plays a fundamental role in early embryonic development and embryonic stem cells. Required for normal spermatogenesis and cerebellum development. Appears to be important for neurodevelopmentally regulated behavior. This is Nuclear receptor subfamily 2 group C member 2 (Nr2c2) from Mus musculus (Mouse).